Here is a 326-residue protein sequence, read N- to C-terminus: Beta-ketoacyl-[acyl-carrier-protein] synthase III (326 aa).

Residues Cys111 and His252 contribute to the active site. Residues 253–257 form an ACP-binding region; the sequence is QANIR. The active site involves Asn282.

Belongs to the thiolase-like superfamily. FabH family. As to quaternary structure, homodimer.

Its subcellular location is the plastid. The protein localises to the chloroplast. The catalysed reaction is malonyl-[ACP] + acetyl-CoA + H(+) = 3-oxobutanoyl-[ACP] + CO2 + CoA. Its pathway is lipid metabolism; fatty acid biosynthesis. Functionally, catalyzes the condensation reaction of fatty acid synthesis by the addition to an acyl acceptor of two carbons from malonyl-ACP. Catalyzes the first condensation reaction which initiates fatty acid synthesis and may therefore play a role in governing the total rate of fatty acid production. Possesses both acetoacetyl-ACP synthase and acetyl transacylase activities. Its substrate specificity determines the biosynthesis of branched-chain and/or straight-chain of fatty acids. The chain is Beta-ketoacyl-[acyl-carrier-protein] synthase III from Porphyra umbilicalis (Purple laver).